The chain runs to 314 residues: Electron transfer flavoprotein subunit alpha (314 aa).

253 to 281 contributes to the FAD binding site; sequence LYVAVGISGAIQHLAGMKDSKVIVAINKD.

It belongs to the ETF alpha-subunit/FixB family. As to quaternary structure, heterodimer of an alpha and a beta subunit. It depends on FAD as a cofactor.

In terms of biological role, the electron transfer flavoprotein serves as a specific electron acceptor for other dehydrogenases. It transfers the electrons to the main respiratory chain via ETF-ubiquinone oxidoreductase (ETF dehydrogenase). In Bradyrhizobium diazoefficiens (strain JCM 10833 / BCRC 13528 / IAM 13628 / NBRC 14792 / USDA 110), this protein is Electron transfer flavoprotein subunit alpha (etfA).